A 2258-amino-acid polypeptide reads, in one-letter code: Genome polyprotein 1 (2258 aa).

One can recognise a Helicase ATP-binding domain in the interval 439-597 (SMAQEAKQWS…AVRRYEIKTV (159 aa)). 487–494 (RAATVNVT) is an ATP binding site. The 167-residue stretch at 612–778 (DKENSLYVLQ…GVQFYINEHF (167 aa)) folds into the Helicase C-terminal domain. The residue at position 1141 (Tyr1141) is an O-(5'-phospho-RNA)-tyrosine. The region spanning 1257-1476 (ATLEGMTMKP…TKPRNMQSAP (220 aa)) is the Peptidase C4 domain. Catalysis depends on for nuclear inclusion protein A activity residues His1302, Asp1338, and Cys1405. The region spanning 1745–1869 (WTHGSGDGSR…AMSPSFMVKF (125 aa)) is the RdRp catalytic domain. Disordered regions lie at residues 2027–2047 (NMAA…RGTS) and 2233–2258 (TSEQ…ALLR). Positions 2242-2258 (TETRRRNDYDGHEALLR) are enriched in basic and acidic residues.

Belongs to the bymoviruses polyprotein 1 family. VPg is uridylylated by the polymerase and is covalently attached to the 5'-end of the genomic RNA. This uridylylated form acts as a nucleotide-peptide primer for the polymerase. In terms of processing, the viral RNA1 of bymoviruses is expressed as a single polyprotein which undergoes post-translational proteolytic processing by the main proteinase NIa-pro resulting in the production of at least eight individual proteins.

It localises to the host cytoplasmic vesicle. The protein localises to the virion. It carries out the reaction RNA(n) + a ribonucleoside 5'-triphosphate = RNA(n+1) + diphosphate. The catalysed reaction is Hydrolyzes glutaminyl bonds, and activity is further restricted by preferences for the amino acids in P6 - P1' that vary with the species of potyvirus, e.g. Glu-Xaa-Xaa-Tyr-Xaa-Gln-|-(Ser or Gly) for the enzyme from tobacco etch virus. The natural substrate is the viral polyprotein, but other proteins and oligopeptides containing the appropriate consensus sequence are also cleaved.. Functionally, indispensable for virus replication. Mediates the cap-independent, EIF4E-dependent translation of viral genomic RNAs. Binds to the cap-binding site of host EIF4E and thus interferes with the host EIF4E-dependent mRNA export and translation. VPg-RNA directly binds EIF4E and is a template for transcription. Also forms trimeric complexes with EIF4E-EIF4G, which are templates for translation. Its function is as follows. Has RNA-binding and proteolytic activities. In terms of biological role, an RNA-dependent RNA polymerase that plays an essential role in the virus replication. The protein is Genome polyprotein 1 of Barley mild mosaic virus (strain Na1) (BaMMV).